A 214-amino-acid chain; its full sequence is Pyridoxine/pyridoxamine 5'-phosphate oxidase (214 aa).

Substrate is bound by residues 8–11 (RKSY) and Lys-67. FMN contacts are provided by residues 62–67 (RVVLLK), 77–78 (YT), Lys-84, and Gln-106. 3 residues coordinate substrate: Tyr-124, Arg-128, and Ser-132. Residues 141 to 142 (QS) and Trp-186 contribute to the FMN site. 192–194 (RLH) provides a ligand contact to substrate. Arg-196 serves as a coordination point for FMN.

This sequence belongs to the pyridoxamine 5'-phosphate oxidase family. In terms of assembly, homodimer. Requires FMN as cofactor.

The catalysed reaction is pyridoxamine 5'-phosphate + O2 + H2O = pyridoxal 5'-phosphate + H2O2 + NH4(+). It carries out the reaction pyridoxine 5'-phosphate + O2 = pyridoxal 5'-phosphate + H2O2. It functions in the pathway cofactor metabolism; pyridoxal 5'-phosphate salvage; pyridoxal 5'-phosphate from pyridoxamine 5'-phosphate: step 1/1. It participates in cofactor metabolism; pyridoxal 5'-phosphate salvage; pyridoxal 5'-phosphate from pyridoxine 5'-phosphate: step 1/1. Catalyzes the oxidation of either pyridoxine 5'-phosphate (PNP) or pyridoxamine 5'-phosphate (PMP) into pyridoxal 5'-phosphate (PLP). The polypeptide is Pyridoxine/pyridoxamine 5'-phosphate oxidase (Flavobacterium johnsoniae (strain ATCC 17061 / DSM 2064 / JCM 8514 / BCRC 14874 / CCUG 350202 / NBRC 14942 / NCIMB 11054 / UW101) (Cytophaga johnsonae)).